A 383-amino-acid polypeptide reads, in one-letter code: Protein COS7 (383 aa).

At 1 to 42 (MKENEVKDEKSVDVLSFKQLESQKIVLPQDLFRSSFTWFCYE) the chain is on the cytoplasmic side. A helical transmembrane segment spans residues 43–63 (IYKSLAFRIWMLLWLPLSVWW). The Extracellular segment spans residues 64–72 (KLSNNCIYP). Residues 73–93 (LIVSLLVLFLGPIFVLVICGL) traverse the membrane as a helical segment. Topologically, residues 94–232 (SRKRSLSKQL…RSKLTWFLKR (139 aa)) are cytoplasmic. Residues 233 to 253 (IFTIYSLPLWLAFLNCICVSQ) traverse the membrane as a helical segment. His-254 is a topological domain (extracellular). Residues 255 to 275 (FCLAFRILCPGLFFLMMVWLF) traverse the membrane as a helical segment. Residues 276–383 (QNMRTTALLV…SRNEESLMKK (108 aa)) lie on the Cytoplasmic side of the membrane.

It belongs to the DUP/COS family.

Its subcellular location is the membrane. This chain is Protein COS7 (COS7), found in Saccharomyces cerevisiae (strain ATCC 204508 / S288c) (Baker's yeast).